The sequence spans 239 residues: Ditrans,polycis-undecaprenyl-diphosphate synthase ((2E,6E)-farnesyl-diphosphate specific) (239 aa).

Residue aspartate 18 is part of the active site. Position 18 (aspartate 18) interacts with Mg(2+). Residues 19-22, tryptophan 23, arginine 31, histidine 35, and 63-65 contribute to the substrate site; these read GNGR and SSE. Residue asparagine 66 is the Proton acceptor of the active site. Residues tryptophan 67, arginine 69, arginine 186, and 192-194 contribute to the substrate site; that span reads RIS. Residue glutamate 205 coordinates Mg(2+).

Belongs to the UPP synthase family. Homodimer. Requires Mg(2+) as cofactor.

It carries out the reaction 8 isopentenyl diphosphate + (2E,6E)-farnesyl diphosphate = di-trans,octa-cis-undecaprenyl diphosphate + 8 diphosphate. Its function is as follows. Catalyzes the sequential condensation of isopentenyl diphosphate (IPP) with (2E,6E)-farnesyl diphosphate (E,E-FPP) to yield (2Z,6Z,10Z,14Z,18Z,22Z,26Z,30Z,34E,38E)-undecaprenyl diphosphate (di-trans,octa-cis-UPP). UPP is the precursor of glycosyl carrier lipid in the biosynthesis of bacterial cell wall polysaccharide components such as peptidoglycan and lipopolysaccharide. This Haemophilus influenzae (strain ATCC 51907 / DSM 11121 / KW20 / Rd) protein is Ditrans,polycis-undecaprenyl-diphosphate synthase ((2E,6E)-farnesyl-diphosphate specific).